Here is a 393-residue protein sequence, read N- to C-terminus: MDCNMVSSSQWDWEHLIMSNPSRTEDDSKQLPTEWEIEKGEGIESIVPHFSGLERVSSGSATSFWHTAVSKSSQSTSINSSSPEAKRCKLASESSPGDSCSNIDFVQVKAPTALEVSVASAESDLCLKLGKRTYSEEYWGRNNNEISAVSMKLLTPSVVAGKSKLCGQSMPVPRCQIDGCELDLSSAKGYHRKHKVCEKHSKCPKVSVSGLERRFCQQCSRFHAVSEFDEKKRSCRKRLSHHNARRRKPQGVFSMNPERVYDRRQHTNMLWNGVSLNARSEEMYEWGNNTYDTKPRQTEKSFTLSFQRGNGSEDQLVASSSRMFSTSQTSGGFPAGKSKFQLHGEDVGEYSGVLHESQDIHRALSLLSTSSDPLAQPHVQPFSLLCSYDVVPK.

The disordered stretch occupies residues 74–96 (QSTSINSSSPEAKRCKLASESSP). The SBP-type zinc-finger motif lies at 172 to 249 (VPRCQIDGCE…SHHNARRRKP (78 aa)). The Zn(2+) site is built by cysteine 175, cysteine 180, cysteine 197, histidine 200, cysteine 216, cysteine 219, histidine 223, and cysteine 235. Residues 232-248 (KRSCRKRLSHHNARRRK) carry the Bipartite nuclear localization signal motif.

The cofactor is Zn(2+).

The protein localises to the nucleus. In terms of biological role, trans-acting factor that binds specifically to the consensus nucleotide sequence 5'-TNCGTACAA-3'. The protein is Squamosa promoter-binding-like protein 11 (SPL11) of Arabidopsis thaliana (Mouse-ear cress).